The primary structure comprises 332 residues: Glycerol-3-phosphate dehydrogenase [NAD(P)+] (332 aa).

NADPH is bound by residues Ser14, Trp15, Arg35, and Lys107. Lys107, Gly137, and Ser139 together coordinate sn-glycerol 3-phosphate. NADPH is bound at residue Ala141. Residues Lys192, Asp245, Ser255, Arg256, and Asn257 each coordinate sn-glycerol 3-phosphate. Residue Lys192 is the Proton acceptor of the active site. Arg256 contributes to the NADPH binding site. Residues Val280 and Glu282 each contribute to the NADPH site.

This sequence belongs to the NAD-dependent glycerol-3-phosphate dehydrogenase family.

It localises to the cytoplasm. The catalysed reaction is sn-glycerol 3-phosphate + NAD(+) = dihydroxyacetone phosphate + NADH + H(+). It carries out the reaction sn-glycerol 3-phosphate + NADP(+) = dihydroxyacetone phosphate + NADPH + H(+). The protein operates within membrane lipid metabolism; glycerophospholipid metabolism. Functionally, catalyzes the reduction of the glycolytic intermediate dihydroxyacetone phosphate (DHAP) to sn-glycerol 3-phosphate (G3P), the key precursor for phospholipid synthesis. The polypeptide is Glycerol-3-phosphate dehydrogenase [NAD(P)+] (Desulfovibrio desulfuricans (strain ATCC 27774 / DSM 6949 / MB)).